The primary structure comprises 586 residues: NudC domain-containing protein 1 (586 aa).

The region spanning 275 to 364 is the CS domain; the sequence is KREPLYNWQQ…EPGCTWAELV (90 aa).

The protein resides in the cytoplasm. The protein localises to the nucleus. The sequence is that of NudC domain-containing protein 1 from Xenopus laevis (African clawed frog).